A 433-amino-acid polypeptide reads, in one-letter code: 23S rRNA (uracil(1939)-C(5))-methyltransferase RlmD (433 aa).

The TRAM domain occupies 10 to 68; sequence RTTTRQIITVSVNDLDSFGQGVARHNGKTLFIPGLLSQENAEVTVTEDKKQYARAKVVR. Residues Cys-81, Cys-87, Cys-90, and Cys-162 each coordinate [4Fe-4S] cluster. S-adenosyl-L-methionine-binding residues include Gln-265, Phe-294, Asn-299, Glu-315, Asn-342, and Asp-363. The active-site Nucleophile is the Cys-389.

It belongs to the class I-like SAM-binding methyltransferase superfamily. RNA M5U methyltransferase family. RlmD subfamily.

It catalyses the reaction uridine(1939) in 23S rRNA + S-adenosyl-L-methionine = 5-methyluridine(1939) in 23S rRNA + S-adenosyl-L-homocysteine + H(+). Its function is as follows. Catalyzes the formation of 5-methyl-uridine at position 1939 (m5U1939) in 23S rRNA. The protein is 23S rRNA (uracil(1939)-C(5))-methyltransferase RlmD of Shigella dysenteriae serotype 1 (strain Sd197).